The sequence spans 882 residues: Translation initiation factor IF-2 (882 aa).

The disordered stretch occupies residues 38–294 (IEDSQASWVK…KSKHKRKKEN (257 aa)). Composition is skewed to basic and acidic residues over residues 66-76 (TRDEAVKKHSG), 109-128 (GRRE…ERHS), and 207-219 (PDNK…DAKR). The segment covering 282 to 292 (PGRKSKHKRKK) has biased composition (basic residues). One can recognise a tr-type G domain in the interval 383 to 556 (ARPPVVTIMG…EMNEIRANPD (174 aa)). The tract at residues 392–399 (GHVDHGKT) is G1. 392-399 (GHVDHGKT) is a GTP binding site. The segment at 417–421 (GITQH) is G2. The tract at residues 438–441 (DTPG) is G3. GTP-binding positions include 438 to 442 (DTPGH) and 492 to 495 (NKID). A G4 region spans residues 492 to 495 (NKID). Residues 528 to 530 (SAK) form a G5 region.

Belongs to the TRAFAC class translation factor GTPase superfamily. Classic translation factor GTPase family. IF-2 subfamily.

The protein resides in the cytoplasm. Functionally, one of the essential components for the initiation of protein synthesis. Protects formylmethionyl-tRNA from spontaneous hydrolysis and promotes its binding to the 30S ribosomal subunits. Also involved in the hydrolysis of GTP during the formation of the 70S ribosomal complex. The polypeptide is Translation initiation factor IF-2 (Syntrophomonas wolfei subsp. wolfei (strain DSM 2245B / Goettingen)).